The chain runs to 69 residues: uncharacterized protein (69 aa).

The signal sequence occupies residues 1–16 (MKKIMLFLAMTSILSA). Cys17 carries N-palmitoyl cysteine lipidation. A lipid anchor (S-diacylglycerol cysteine) is attached at Cys17.

It localises to the cell membrane. This is an uncharacterized protein from Bacillus subtilis (strain 168).